Reading from the N-terminus, the 242-residue chain is MQKMPIELKGSNFTFLVLYLNTNNVDLISKSLYKKIQEYPQFFKNVPVIVNVSNLLNQVNWKKIQEIIIEYGFYIVGVSGCKDNYFKKIIVESGLPVLLESNTTNTNKDLRSFYHTSTLKKTKNEQRLRVKKIEKTHIINTPVRSGQKIYAKYSDLVVINNVSAGAELVADGNIHVYGSVRGRVLAGANGDITSKIFCTTLFAELISVSGQYWLSDQIPSHFIGKSAQIYLKNKFLTINSLS.

The protein belongs to the MinC family. As to quaternary structure, interacts with MinD and FtsZ.

Its function is as follows. Cell division inhibitor that blocks the formation of polar Z ring septums. Rapidly oscillates between the poles of the cell to destabilize FtsZ filaments that have formed before they mature into polar Z rings. Prevents FtsZ polymerization. This chain is Probable septum site-determining protein MinC, found in Buchnera aphidicola subsp. Schizaphis graminum (strain Sg).